A 404-amino-acid polypeptide reads, in one-letter code: Putative arginine deiminase (404 aa).

Catalysis depends on cysteine 394, which acts as the Amidino-cysteine intermediate.

It belongs to the arginine deiminase family.

The protein localises to the cytoplasm. It carries out the reaction L-arginine + H2O = L-citrulline + NH4(+). It participates in amino-acid degradation; L-arginine degradation via ADI pathway; carbamoyl phosphate from L-arginine: step 1/2. The polypeptide is Putative arginine deiminase (arcA) (Mycoplasma pneumoniae (strain ATCC 29342 / M129 / Subtype 1) (Mycoplasmoides pneumoniae)).